We begin with the raw amino-acid sequence, 379 residues long: Cell cycle checkpoint control protein RAD9A (379 aa).

Tyr-17 bears the Phosphotyrosine mark. The segment at 40 to 80 (FLFAPLFFQQYQAATPGQDLLRCKILMKSFLSVFRSLAMLE) is possesses 3'-5' exonuclease activity. The sufficient for interaction with ABL1 stretch occupies residues 255–379 (SDTDSHSQDL…VLAEDSEGEG (125 aa)). The segment covering 257 to 271 (TDSHSQDLGSPERHQ) has biased composition (basic and acidic residues). Disordered regions lie at residues 257–289 (TDSH…DFAN) and 308–379 (SRVL…EGEG). Phosphoserine is present on residues Ser-261, Ser-266, Ser-317, Ser-330, Ser-363, Ser-368, and Ser-375.

The protein belongs to the rad9 family. In terms of assembly, component of the toroidal 9-1-1 (RAD9-RAD1-HUS1) complex, composed of RAD9A, RAD1 and HUS1. The 9-1-1 complex associates with LIG1, POLB, FEN1, RAD17, HDAC1, RPA1 and RPA2. The 9-1-1 complex associates with the RAD17-RFC complex. RAD9A interacts with BCL2L1, FEN1, RAD9B, ABL1, RPA1, ATAD5 and RPA2. Interacts with DNAJC7. Interacts (when phosphorylated) with TOPBP1. Constitutively phosphorylated on serine and threonine amino acids in absence of DNA damage. Hyperphosphorylated by PRKCD and ABL1 upon DNA damage. Its phosphorylation by PRKCD may be required for the formation of the 9-1-1 complex. Phosphorylated at Ser-330 and Ser-375 by CK2, promoting interaction with TOPBP1.

It is found in the nucleus. The catalysed reaction is Exonucleolytic cleavage in the 3'- to 5'-direction to yield nucleoside 5'-phosphates.. Its function is as follows. Component of the 9-1-1 cell-cycle checkpoint response complex that plays a major role in DNA repair. The 9-1-1 complex is recruited to DNA lesion upon damage by the RAD17-replication factor C (RFC) clamp loader complex. Acts then as a sliding clamp platform on DNA for several proteins involved in long-patch base excision repair (LP-BER). The 9-1-1 complex stimulates DNA polymerase beta (POLB) activity by increasing its affinity for the 3'-OH end of the primer-template and stabilizes POLB to those sites where LP-BER proceeds; endonuclease FEN1 cleavage activity on substrates with double, nick, or gap flaps of distinct sequences and lengths; and DNA ligase I (LIG1) on long-patch base excision repair substrates. The 9-1-1 complex is necessary for the recruitment of RHNO1 to sites of double-stranded breaks (DSB) occurring during the S phase. RAD9A possesses 3'-&gt;5' double stranded DNA exonuclease activity. This is Cell cycle checkpoint control protein RAD9A (RAD9A) from Macaca fascicularis (Crab-eating macaque).